A 310-amino-acid chain; its full sequence is E3 ubiquitin-protein ligase AIP2 (310 aa).

The RING-type; atypical zinc finger occupies 230 to 271 (CCICKENLVIGDKMQELPCKHTFHPPCLKPWLDEHNSCPICR). Residues 276 to 306 (TDDQKYENWKEREKEAEEERKGAENAVRGGE) are a coiled coil. A compositionally biased stretch (basic and acidic residues) spans 285–298 (KEREKEAEEERKGA). The interval 285–310 (KEREKEAEEERKGAENAVRGGEYMYV) is disordered.

Interacts with ABI3 (via C-terminus). Auto-ubiquitinated. Highly expressed in leaves and at lower levels in flowers and seeds.

It is found in the nucleus. Its subcellular location is the cytoplasm. It catalyses the reaction S-ubiquitinyl-[E2 ubiquitin-conjugating enzyme]-L-cysteine + [acceptor protein]-L-lysine = [E2 ubiquitin-conjugating enzyme]-L-cysteine + N(6)-ubiquitinyl-[acceptor protein]-L-lysine.. Its pathway is protein modification; protein ubiquitination. Functionally, E3 ubiquitin-protein ligase that acts as a negative regulator of abscisic acid (ABA) signaling. Mediates ubiquitination and subsequent proteasomal degradation of the transcription factor ABI3. This chain is E3 ubiquitin-protein ligase AIP2 (AIP2), found in Arabidopsis thaliana (Mouse-ear cress).